The primary structure comprises 569 residues: Hemin/hemoglobin-binding protein 2 (569 aa).

A signal peptide spans 1 to 28; sequence MKKLWKKGLVAFLALTLIFQLIPGFASA. NEAT domains follow at residues 34-173, 184-307, and 360-484; these read KDGG…FKVI, LSDG…ATAA, and LNNH…IKDI. Heme contacts are provided by residues 204–205, Y280, and Y289; that span reads SS. Residues 307–357 are disordered; sequence ASSYPGSDETPPVVNPGETNPPVTKPDPGTTNPPVTTPPTTPSKPAVVDPK. Polar residues predominate over residues 502 to 511; that stretch reads TGNVASNNNA. Positions 502–537 are disordered; that stretch reads TGNVASNNNAGPKLAKPDFDDTNSVQKTASKTEKNA. Residues 536-540 carry the NXZTN sorting signal motif; sequence NAKTN. T539 bears the Pentaglycyl murein peptidoglycan amidated threonine mark. Positions 540 to 569 are cleaved as a propeptide — removed by sortase B; it reads NDSSSMVWYITLFGASFLYLAYRLKRKRLS.

The protein resides in the cell surface. Its subcellular location is the secreted. It is found in the cell wall. With respect to regulation, is overexpressed in mecA, clpC and clpP mutants, suggesting the protein level is controlled by MecA, ClpC and ClpP (at protein level). Its function is as follows. Acts as an extracellular and cell wall-bound hemophore; scavenges host heme and hemoglobin from the environment and also serves as a cell wall receptor for both. At low hemin (Hn) and hemoglobin (Hb) concentrations adsorbs Hn/Hb and presumably directs it to membrane transporters. Soluble Hbp2 can probably pass Hn/Hb to cell wall-anchored Hbp2, and both forms can accept Hn/Hb from Hbp1. May be involved in crossing the digestive barrier in infected animals. Binds host hemin. Binds host hemoglobin with affinity in the nanomolar range. The protein is Hemin/hemoglobin-binding protein 2 of Listeria monocytogenes serovar 1/2a (strain ATCC BAA-679 / EGD-e).